The primary structure comprises 2496 residues: Hornerin (2496 aa).

Positions 1 to 81 are S-100-like; sequence MPKLLESIVT…TEYLLMILKL (81 aa). 2 consecutive EF-hand domains span residues 13–48 and 49–84; these read DVFYQYATEYGNCDMLSKEEMKELLVTEFHQILKNP and DDPDTVDIIMQNLDRDHNHKVDFTEYLLMILKLTKA. 7 residues coordinate Ca(2+): Met27, Glu32, Asp62, Asp64, Asn66, Lys68, and Glu73. The interval 82–98 is s (spacer); that stretch reads TKACNKIIGKDYCQASG. A disordered region spans residues 97-2496; the sequence is SGSKQKNHSH…SGQTSGCGSG (2400 aa). A 1; truncated repeat occupies 99–145; sequence SKQKNHSHQHQEEQSKKETENKEQKGSISSSAGENDSYSRGSRGSNK. A compositionally biased stretch (basic and acidic residues) spans 107–123; sequence QHQEEQSKKETENKEQK. A compositionally biased stretch (polar residues) spans 124-134; sequence GSISSSAGEND. The segment covering 144 to 153 has biased composition (basic residues); sequence NKSKSKKLRK. Tandem repeats lie at residues 146-231, 232-321, 326-400, 401-491, 492-577, 578-668, 669-748, 749-839, 840-926, 927-1017, 1018-1097, 1098-1188, 1189-1274, 1275-1365, 1366-1445, 1446-1536, 1537-1622, 1623-1713, 1714-1793, 1794-1884, 1885-1970, 1971-2061, 2062-2141, 2142-2232, 2233-2312, 2313-2403, and 2410-2496. 3 stretches are compositionally biased toward low complexity: residues 183-194, 200-246, and 270-286; these read SGFSNSSGNGRP, SGFP…SGHS, and RESSGSQEYSSGSSEEP. Polar residues-rich tracts occupy residues 294 to 319 and 326 to 355; these read RKNSSTCGKNGSYSGQSTGRHQQGFG and SGQSITSANHGSHSNQSSCSGTRECGSSES. Low complexity-rich tracts occupy residues 362 to 379, 394 to 415, and 423 to 448; these read VSGSGHSSSTGKYTSTSG, SSGSEQYGASSGQSSGCSSGQS, and SGSRNSSTQSRGRSTSRESSTSQQFG. A compositionally biased stretch (gly residues) spans 449–464; that stretch reads SGSGRSSGFSQGGSGQ. Low complexity predominate over residues 465 to 565; that stretch reads GRSSRGGQQG…GQTSSSTRQG (101 aa). Phosphoserine occurs at positions 506 and 508. Over residues 566–576 the composition is skewed to gly residues; that stretch reads SGQGQASGSGR. Composition is skewed to low complexity over residues 577 to 593 and 600 to 625; these read YGASSGQTSGCGSGQST and SGSRNSSTQSRGRSTSRESSTSQRYG. A compositionally biased stretch (gly residues) spans 626–641; that stretch reads SGSGESSGFSQGGSGQ. Low complexity-rich tracts occupy residues 642–670 and 679–713; these read GRSSRGGQQGSFSGQTSGRSQHQSGSRHG and SGQQGSHHGHSSSSGTHNSGSSQSSSTQWSHGSGS. Arg646 is modified (omega-N-methylarginine). Position 716 is a phosphoserine (Ser716). Over residues 723 to 736 the composition is skewed to low complexity; sequence GSTSGQTASSTRQG. Over residues 737–747 the composition is skewed to gly residues; sequence SGQGQASGSGR. Low complexity-rich tracts occupy residues 748 to 764, 771 to 796, 804 to 884, and 891 to 914; these read CGASSGQTSGCGSGQST, SGSRNSSTQSRGRSTSRESSTSQRFG, GFSQ…SRPA, and SGRSSGLGQYGSPSGQTSSSTRQG. Ser815 is modified (phosphoserine). Residues 915 to 925 are compositionally biased toward gly residues; sequence SGQGQASGSGR. Composition is skewed to low complexity over residues 926 to 942 and 949 to 974; these read YGASSGQTSGCGSGQST and SGSRNSSTQSRGRSTSRESSTSQRYG. The span at 975 to 990 shows a compositional bias: gly residues; sequence SGSGESSGFSQGGSGQ. Low complexity-rich tracts occupy residues 991-1019, 1028-1062, and 1072-1085; these read GRSSRGGQQGSFSGQTSGRSQHQSGSRHG, SGQQGSHHGHSSSSGTHNSGSSQSSSTQWSHGSGS, and GSTSGQTASSTRQG. Arg995 bears the Omega-N-methylarginine mark. Residues 1086–1096 are compositionally biased toward gly residues; that stretch reads SGQGQASGSGR. Low complexity-rich tracts occupy residues 1097 to 1113, 1120 to 1145, and 1153 to 1262; these read CGASSGQTSGCGSGQST, SGSRNSSTQSRGRSTSRESSTSQRFG, and GFSQ…TRQG. The residue at position 1229 (Ser1229) is a Phosphoserine. Gly residues predominate over residues 1263-1273; it reads SGQGQASGSGR. Residues 1281-1292 show a composition bias toward polar residues; it reads TSGCRSGQSTRY. The span at 1298–1322 shows a compositional bias: low complexity; it reads GSRNSSTQSRGRSTSRESSTSQRYG. Residues 1323–1338 are compositionally biased toward gly residues; the sequence is SGSGESSGFSQGGSGQ. Low complexity-rich tracts occupy residues 1339-1367, 1376-1410, and 1420-1433; these read GRSSRGGQQGSFSGQTSGRNQHQSGSRHG, SGQQGSHHGHSSSSGTHNSGSSQSSSTQWSHGSGS, and GSTSGQTASSTRQG. Arg1343 is subject to Omega-N-methylarginine. Over residues 1434–1444 the composition is skewed to gly residues; that stretch reads SGQGQASGSGR. 3 stretches are compositionally biased toward low complexity: residues 1445 to 1461, 1468 to 1493, and 1501 to 1610; these read CGASSGQTSGCGSGQST, SGSRNSSTQSRGRSTSRESSTSQRFG, and GFSQ…TRQG. Residues Ser1551 and Ser1553 each carry the phosphoserine modification. Over residues 1611–1621 the composition is skewed to gly residues; the sequence is SGQGQASGSGR. Low complexity-rich tracts occupy residues 1622–1631 and 1645–1670; these read YGASSGQTSG and SGSRNSSTQSRGRSTSRESSTSQRCG. Ser1650 is subject to Phosphoserine. A compositionally biased stretch (gly residues) spans 1671–1686; sequence SGSGESSGFSQGGSGQ. 3 stretches are compositionally biased toward low complexity: residues 1687 to 1715, 1724 to 1758, and 1768 to 1781; these read GRSSRGGQQGSFSGQTSGRSQHQSGSRHG, SGQQGSHHGHSSSSGTHNSGSSQSSSTQWSHGSGS, and GSTSGQTASSTRQG. Omega-N-methylarginine is present on Arg1691. Gly residues predominate over residues 1782–1792; that stretch reads SGQGQASGSGR. A compositionally biased stretch (polar residues) spans 1800–1811; sequence TSGCGSDQSTRY. Low complexity-rich tracts occupy residues 1816 to 1841 and 1849 to 1958; these read SGSRNSSTQSRGRSTSRESSTSQRFG and GFSQ…TRQG. Over residues 1959 to 1969 the composition is skewed to gly residues; sequence SGQGQASGSGR. Composition is skewed to low complexity over residues 1970-1986 and 1993-2018; these read YGASSGQTSGCGSGQST and SGSRNSSTQSRGRSTSRESSTSQRYG. Ser2011 is modified (phosphoserine). A compositionally biased stretch (gly residues) spans 2019 to 2034; the sequence is SGSGESSGFSQGGSGQ. Composition is skewed to low complexity over residues 2035–2063 and 2072–2106; these read GRSSRGGQQGSFSGQTSGRSQHQSGSRHG and SGQQGSHHGHSSSSGTHNSGSSQSSSTQWSHGSGS. Arg2039 is modified (omega-N-methylarginine). Phosphoserine is present on residues Ser2109 and Ser2124. A compositionally biased stretch (low complexity) spans 2116–2129; sequence GSTSGQTASSTRQG. Positions 2130–2140 are enriched in gly residues; sequence SGQGQASGSGR. 2 stretches are compositionally biased toward low complexity: residues 2141 to 2157 and 2164 to 2189; these read CGASSGQTSGCGSGQST and SGSRNSSTQSRGRSTSRESSTSQRYG. A compositionally biased stretch (gly residues) spans 2190-2205; the sequence is SGSGESSGFSQGGSGQ. Low complexity-rich tracts occupy residues 2206–2234 and 2243–2300; these read GRSSRGGQQGSFSGQTSGRSQHQSGSRHG and SGQQ…TRQG. Arg2210 is subject to Omega-N-methylarginine. The segment covering 2301-2311 has biased composition (gly residues); the sequence is SGQGQASGSGR. Composition is skewed to low complexity over residues 2312–2328 and 2335–2360; these read YGASSGQTSGCGSGQST and SGSRNSSTQSRGRSTSRESSTSQRYG. Phosphoserine is present on Ser2353. Gly residues predominate over residues 2361-2376; sequence SGSGESSGFSQGGSGQ. Low complexity-rich tracts occupy residues 2377–2405, 2414–2448, and 2458–2471; these read GRSSRGGQQGSFSGQTSGRSQHQSGSRHG, SGQQGSHHGHSSSSGTHNSGSSQSSSTQWSHGSGS, and GSTSGQTASSTRQG. Arg2381 is subject to Omega-N-methylarginine. The segment covering 2472–2482 has biased composition (gly residues); the sequence is SGQGQASGSGR.

The protein belongs to the S100-fused protein family. In the N-terminal section; belongs to the S-100 family. Post-translationally, processed during the process of epidermal differentiation. In terms of processing, forms covalent cross-links mediated by transglutaminase TGM3, between glutamine and the epsilon-amino group of lysine residues (in vitro). Embryonic skin. Highest level in the adult forestomach followed by the skin. Lower levels in the tongue, esophagus. Detected in the granular and cornified layers of the mature epidermis.

It localises to the cytoplasmic granule. Functionally, component of the epidermal cornified cell envelopes. The polypeptide is Hornerin (Hrnr) (Mus musculus (Mouse)).